We begin with the raw amino-acid sequence, 89 residues long: Small ribosomal subunit protein uS19 (89 aa).

Belongs to the universal ribosomal protein uS19 family.

Functionally, protein S19 forms a complex with S13 that binds strongly to the 16S ribosomal RNA. The polypeptide is Small ribosomal subunit protein uS19 (Bacteroides thetaiotaomicron (strain ATCC 29148 / DSM 2079 / JCM 5827 / CCUG 10774 / NCTC 10582 / VPI-5482 / E50)).